The primary structure comprises 262 residues: DNA repair protein RecO (262 aa).

Belongs to the RecO family.

Its function is as follows. Involved in DNA repair and RecF pathway recombination. The sequence is that of DNA repair protein RecO from Enterococcus faecalis (strain ATCC 700802 / V583).